The primary structure comprises 435 residues: Dual specificity protein kinase FUZ7 (435 aa).

Residues 1–61 (MLSSGAGSSI…TIGKSSAVTP (61 aa)) are disordered. Residues 46–59 (AASNASTIGKSSAV) are compositionally biased toward polar residues. The region spanning 109–417 (LKTLSELGAG…PKDLTKHQYV (309 aa)) is the Protein kinase domain. Residues 115-123 (LGAGNGGTV) and K138 contribute to the ATP site. The Proton acceptor role is filled by D231. Residues 307 to 359 (NEEDDDSDADNNYTNEDLAGTLSPTKPAPMISLGQNEKQRRRKSKPAGVSLEG) are disordered.

This sequence belongs to the protein kinase superfamily. STE Ser/Thr protein kinase family. MAP kinase kinase subfamily.

The enzyme catalyses L-seryl-[protein] + ATP = O-phospho-L-seryl-[protein] + ADP + H(+). It catalyses the reaction L-threonyl-[protein] + ATP = O-phospho-L-threonyl-[protein] + ADP + H(+). It carries out the reaction L-tyrosyl-[protein] + ATP = O-phospho-L-tyrosyl-[protein] + ADP + H(+). Functionally, protein kinase that is necessary for a-locus-dependent processes, such as conjugation tube formation, filament formation, and maintenance of filamentous growth, and for a-locus-independent processes, such as tumor induction and teliospore germination. This is Dual specificity protein kinase FUZ7 (FUZ7) from Mycosarcoma maydis (Corn smut fungus).